Reading from the N-terminus, the 276-residue chain is Large ribosomal subunit protein uL2 (276 aa).

The disordered stretch occupies residues 225 to 276; that stretch reads MNPNDHPHGGGEGRNPIGRNPVTPWGKPALGAKTRKKKNPSNRFIVKRRGKK. Basic residues predominate over residues 257–276; sequence KTRKKKNPSNRFIVKRRGKK.

It belongs to the universal ribosomal protein uL2 family. Part of the 50S ribosomal subunit. Forms a bridge to the 30S subunit in the 70S ribosome.

Its function is as follows. One of the primary rRNA binding proteins. Required for association of the 30S and 50S subunits to form the 70S ribosome, for tRNA binding and peptide bond formation. It has been suggested to have peptidyltransferase activity; this is somewhat controversial. Makes several contacts with the 16S rRNA in the 70S ribosome. The chain is Large ribosomal subunit protein uL2 from Desulfitobacterium hafniense (strain DSM 10664 / DCB-2).